The sequence spans 296 residues: Probable endonuclease 4 (296 aa).

His68, His109, Glu144, Asp178, His181, His213, Asp226, His228, and Glu258 together coordinate Zn(2+).

It belongs to the AP endonuclease 2 family. The cofactor is Zn(2+).

It catalyses the reaction Endonucleolytic cleavage to 5'-phosphooligonucleotide end-products.. In terms of biological role, endonuclease IV plays a role in DNA repair. It cleaves phosphodiester bonds at apurinic or apyrimidinic (AP) sites, generating a 3'-hydroxyl group and a 5'-terminal sugar phosphate. This chain is Probable endonuclease 4, found in Pediococcus pentosaceus (strain ATCC 25745 / CCUG 21536 / LMG 10740 / 183-1w).